Here is an 895-residue protein sequence, read N- to C-terminus: Collagen alpha-1(I) chain (895 aa).

The interval 1–895 is disordered; the sequence is GPMGPSGPRG…PGPIGPPGPR (895 aa). Positions 20–39 are enriched in low complexity; the sequence is PQGFQGPPGEPGEPGASGPM. Residues 51 to 65 are compositionally biased toward basic and acidic residues; the sequence is NGDDGEAGKPGRPGE. Serine 90 is modified (phosphoserine). Low complexity-rich tracts occupy residues 98–114 and 137–150; these read DAGPAGPKGEPGSPGEN and PAGARGNDGATGAA. Residues 152–164 are compositionally biased toward pro residues; it reads PPGPTGPAGPPGF. Composition is skewed to low complexity over residues 198–237, 302–336, 348–374, 383–399, 553–564, and 575–593; these read AGAAGPAGNPGADGQPGAKGANGAPGIAGAPGFPGARGPS, ERGFPGADGVAGPKGPAGERGAPGPAGPKGSPGEA, KGITGSPGSPGPDGKTGPPGPAGQDGR, ARGQAGVMGFPGPKGAA, TGPSGPAGPTGA, and AGFAGPPGADGQPGAKGDA. A Phosphoserine modification is found at serine 556. Over residues 595–607 the composition is skewed to pro residues; it reads PPGPAGPAGPPGP. Low complexity-rich tracts occupy residues 608–635, 660–669, and 679–703; these read IGSVGAPGPKGSAGPPGATGFPGAAGRV, ETGPAGRPGE, and AGEKGSPGADGPAGAPGTPGPQGIA. The span at 741 to 751 shows a compositional bias: pro residues; the sequence is PPGPVGPPGIA. Over residues 753-768 the composition is skewed to low complexity; it reads PPGESGREGSPGAEGS. Residues 787–802 are compositionally biased toward pro residues; that stretch reads AGPPGAPGAPGAPGPV. Low complexity-rich tracts occupy residues 823 to 838 and 853 to 886; these read IGPVGARGPAGPQGPR and PGEQGPSGASGPAGPRGPPGSAGAPGKDGINGIP.

It belongs to the fibrillar collagen family. As to quaternary structure, trimers of one alpha 2(I) and two alpha 1(I) chains. Post-translationally, prolines at the third position of the tripeptide repeating unit (G-X-Y) are hydroxylated in some or all of the chains. In terms of tissue distribution, forms the fibrils of tendon, ligaments and bones. In bones, the fibrils are mineralized with calcium hydroxyapatite.

The protein localises to the secreted. It localises to the extracellular space. The protein resides in the extracellular matrix. Functionally, type I collagen is a member of group I collagen (fibrillar forming collagen). This is Collagen alpha-1(I) chain from Equus sp.